The primary structure comprises 157 residues: Glutathione peroxidase homolog BsaA (157 aa).

Cysteine 35 is an active-site residue.

The protein belongs to the glutathione peroxidase family.

This is Glutathione peroxidase homolog BsaA (bsaA) from Halalkalibacterium halodurans (strain ATCC BAA-125 / DSM 18197 / FERM 7344 / JCM 9153 / C-125) (Bacillus halodurans).